The sequence spans 306 residues: Protein STPG3 (306 aa).

A disordered region spans residues 210–230 (CSYTPLLPTSKPSGEKRPSPN).

The chain is Protein STPG3 from Mus musculus (Mouse).